Here is a 1641-residue protein sequence, read N- to C-terminus: Alpha-2-macroglobulin (1641 aa).

Positions 1-31 (MRDRVAMMLRPLVRGWIPRAVLLLTVAFSFG) are cleaved as a signal peptide. The N-palmitoyl cysteine moiety is linked to residue cysteine 32. Cysteine 32 carries the S-diacylglycerol cysteine lipid modification. A cross-link (isoglutamyl cysteine thioester (Cys-Gln)) is located at residues 1166–1169 (CAEQ).

It belongs to the protease inhibitor I39 (alpha-2-macroglobulin) family. Bacterial alpha-2-macroglobulin subfamily.

The protein resides in the cell membrane. In terms of biological role, protects the bacterial cell from host peptidases. The polypeptide is Alpha-2-macroglobulin (Xylella fastidiosa (strain Temecula1 / ATCC 700964)).